A 511-amino-acid chain; its full sequence is Tryptophan 5-halogenase PyrH (511 aa).

The FAD site is built by glycine 10, alanine 13, serine 36, valine 39, isoleucine 42, valine 44, and alanine 47. Position 50 (serine 50) interacts with L-tryptophan. The active site involves lysine 75. Proline 93, glutamine 160, and glutamine 163 together coordinate L-tryptophan. Residues valine 195 and leucine 345 each contribute to the FAD site. Chloride is bound by residues threonine 356 and glycine 357. An FAD-binding site is contributed by isoleucine 358. Residues glycine 450 and tyrosine 454 each coordinate L-tryptophan.

The protein belongs to the flavin-dependent halogenase family. Bacterial tryptophan halogenase subfamily. In terms of assembly, homodimer.

The enzyme catalyses L-tryptophan + FADH2 + chloride + O2 = 5-chloro-L-tryptophan + FAD + 2 H2O. The protein operates within antibiotic biosynthesis. Functionally, involved in the biosynthesis of the antibiotic compound pyrroindomycin B. Catalyzes the chlorination of tryptophan (Trp) at C5 position to yield 5-chloro-L-tryptophan. It is also able to use bromide ions to generate monobrominated Trp, but the brominating activity is only about 75% of the chlorinating activity. The chain is Tryptophan 5-halogenase PyrH from Streptomyces rugosporus.